Consider the following 153-residue polypeptide: Phosphopantetheine adenylyltransferase (153 aa).

Serine 11 serves as a coordination point for substrate. ATP is bound by residues 11-12 (SF) and histidine 19. The substrate site is built by lysine 43, threonine 75, and arginine 89. Residues 90–92 (GIR), glutamate 100, and 124–130 (LSFISSS) contribute to the ATP site.

It belongs to the bacterial CoaD family. In terms of assembly, homohexamer. It depends on Mg(2+) as a cofactor.

Its subcellular location is the cytoplasm. The catalysed reaction is (R)-4'-phosphopantetheine + ATP + H(+) = 3'-dephospho-CoA + diphosphate. It participates in cofactor biosynthesis; coenzyme A biosynthesis; CoA from (R)-pantothenate: step 4/5. Reversibly transfers an adenylyl group from ATP to 4'-phosphopantetheine, yielding dephospho-CoA (dPCoA) and pyrophosphate. This is Phosphopantetheine adenylyltransferase from Porphyromonas gingivalis (strain ATCC 33277 / DSM 20709 / CIP 103683 / JCM 12257 / NCTC 11834 / 2561).